A 224-amino-acid polypeptide reads, in one-letter code: uncharacterized protein (224 aa).

Residues 1–16 (MKILYSFLLLPFFSCA) form the signal peptide.

This is an uncharacterized protein from Escherichia coli.